We begin with the raw amino-acid sequence, 113 residues long: Colicin-E1 immunity protein (113 aa).

Functionally, this protein is able to protect a cell, which harbors the plasmid ColE1 encoding colicin E1, against colicin E1. The sequence is that of Colicin-E1 immunity protein (imm) from Escherichia coli.